The primary structure comprises 453 residues: Serine protease HTRA3 (453 aa).

The N-terminal stretch at 1 to 17 (MQARALLLAALAALALA) is a signal peptide. The region spanning 21-84 (PAAPCPARCD…ECVRGLCRCR (64 aa)) is the IGFBP N-terminal domain. 8 cysteine pairs are disulfide-bonded: cysteine 25–cysteine 48, cysteine 29–cysteine 50, cysteine 34–cysteine 51, cysteine 39–cysteine 54, cysteine 62–cysteine 76, cysteine 70–cysteine 81, cysteine 83–cysteine 101, and cysteine 90–cysteine 126. A Kazal-like domain is found at 64 to 128 (GPLDSPCGES…RQLQKGACPL (65 aa)). Positions 175 to 340 (GSGFIMSEAG…AIPSDRITRF (166 aa)) are serine protease. Residues histidine 191, aspartate 227, and serine 305 each act as charge relay system in the active site. Residues 359–444 (IRMRTITPSL…EVRRGNDDLL (86 aa)) form the PDZ domain.

The protein belongs to the peptidase S1C family. In terms of assembly, homotrimer. Interacts with TGFB1; the interaction inhibits TGFB-mediated signaling. Interacts with BMP4; the interaction inhibits BMP4-mediated signaling. Interacts with TGFB2 and GDF5. Interacts with MYH9. Widely expressed, with highest levels in both adult and fetal heart, ovary, uterus placenta, and bladder. In the endometrium, expressed in epithelial glands and the stroma. Also present in leukocytes. Isoform 1 is predominant in heart and skeletal muscle, whereas isoform 2 is predominant in placenta and kidney.

It is found in the secreted. In terms of biological role, serine protease that cleaves beta-casein/CSN2 as well as several extracellular matrix (ECM) proteoglycans such as decorin/DCN, biglycan/BGN and fibronectin/FN1. Inhibits signaling mediated by TGF-beta family proteins possibly indirectly by degradation of these ECM proteoglycans. May act as a tumor suppressor. Negatively regulates, in vitro, trophoblast invasion during placental development and may be involved in the development of the placenta in vivo. May also have a role in ovarian development, granulosa cell differentiation and luteinization. The sequence is that of Serine protease HTRA3 (HTRA3) from Homo sapiens (Human).